Consider the following 252-residue polypeptide: Putative teichuronic acid biosynthesis glycosyltransferase TuaG (252 aa).

This sequence belongs to the glycosyltransferase 2 family.

Its pathway is cell wall biogenesis; teichuronic acid biosynthesis. The polypeptide is Putative teichuronic acid biosynthesis glycosyltransferase TuaG (tuaG) (Bacillus subtilis (strain 168)).